A 463-amino-acid polypeptide reads, in one-letter code: Cysteine--tRNA ligase (463 aa).

Cysteine 29 is a binding site for Zn(2+). The short motif at proline 31–asparagine 41 is the 'HIGH' region element. Residues cysteine 227, histidine 252, and glutamate 256 each coordinate Zn(2+). A 'KMSKS' region motif is present at residues lysine 285–serine 289. Position 288 (lysine 288) interacts with ATP.

It belongs to the class-I aminoacyl-tRNA synthetase family. Monomer. It depends on Zn(2+) as a cofactor.

The protein resides in the cytoplasm. The catalysed reaction is tRNA(Cys) + L-cysteine + ATP = L-cysteinyl-tRNA(Cys) + AMP + diphosphate. The polypeptide is Cysteine--tRNA ligase (Rhodopseudomonas palustris (strain BisB5)).